The sequence spans 812 residues: Valine--tRNA ligase (812 aa).

Positions 46-56 (PTVSGQLHIGH) match the 'HIGH' region motif. The 'KMSKS' region signature appears at 536-540 (KMSKS). Residue Lys-539 coordinates ATP.

Belongs to the class-I aminoacyl-tRNA synthetase family. ValS type 2 subfamily. In terms of assembly, monomer.

Its subcellular location is the cytoplasm. The enzyme catalyses tRNA(Val) + L-valine + ATP = L-valyl-tRNA(Val) + AMP + diphosphate. Its function is as follows. Catalyzes the attachment of valine to tRNA(Val). As ValRS can inadvertently accommodate and process structurally similar amino acids such as threonine, to avoid such errors, it has a 'posttransfer' editing activity that hydrolyzes mischarged Thr-tRNA(Val) in a tRNA-dependent manner. This chain is Valine--tRNA ligase, found in Rickettsia conorii (strain ATCC VR-613 / Malish 7).